A 174-amino-acid chain; its full sequence is B3 domain-containing protein At3g06220 (174 aa).

The segment at residues 8 to 101 (PRFYTVFLSC…SYEVSIYGRG (94 aa)) is a DNA-binding region (TF-B3). Positions 114–174 (EISDESESDN…ISDASDSDYY (61 aa)) are disordered. Composition is skewed to acidic residues over residues 139–150 (ENSDDTEGDNDS) and 164–174 (EISDASDSDYY).

It is found in the nucleus. This Arabidopsis thaliana (Mouse-ear cress) protein is B3 domain-containing protein At3g06220.